The primary structure comprises 291 residues: Probable alpha-L-glutamate ligase (291 aa).

The ATP-grasp domain maps to 104-287 (HQLLASQGID…VAGTIIQHLE (184 aa)). ATP-binding positions include lysine 141, 178-179 (EF), aspartate 187, and 211-213 (RSN). Aspartate 248, glutamate 260, and asparagine 262 together coordinate Mg(2+). Aspartate 248, glutamate 260, and asparagine 262 together coordinate Mn(2+).

It belongs to the RimK family. Mg(2+) serves as cofactor. The cofactor is Mn(2+).

The polypeptide is Probable alpha-L-glutamate ligase (Xanthomonas campestris pv. campestris (strain B100)).